We begin with the raw amino-acid sequence, 509 residues long: Scavenger receptor class B member 1 (509 aa).

Over 1–11 (MGGSARARWVA) the chain is Cytoplasmic. A helical membrane pass occupies residues 12-32 (VGLGVVGLLCAVLGVVMILVM). Topologically, residues 33–440 (PSLIKQQVLK…YTQLVLMPQV (408 aa)) are extracellular. 9 N-linked (GlcNAc...) asparagine glycosylation sites follow: asparagine 102, asparagine 108, asparagine 173, asparagine 212, asparagine 227, asparagine 255, asparagine 310, asparagine 330, and asparagine 383. The cysteines at positions 251 and 384 are disulfide-linked. A helical transmembrane segment spans residues 441–461 (LQYVQYVLLGLGGLLLLVPVI). Topologically, residues 462-509 (YQLRSQEKCFLFWSGSKKGSQDKEAIQAYSESLMSPAAKGTVLQEAKL) are cytoplasmic.

This sequence belongs to the CD36 family. In terms of processing, N-glycosylated. The six cysteines of the extracellular domain are all involved in intramolecular disulfide bonds.

The protein resides in the cell membrane. It is found in the membrane. It localises to the caveola. Receptor for different ligands such as phospholipids, cholesterol ester, lipoproteins, phosphatidylserine and apoptotic cells. Receptor for HDL, mediating selective uptake of cholesteryl ether and HDL-dependent cholesterol efflux. Also facilitates the flux of free and esterified cholesterol between the cell surface and apoB-containing lipoproteins and modified lipoproteins, although less efficiently than HDL. May be involved in the phagocytosis of apoptotic cells, via its phosphatidylserine binding activity. This chain is Scavenger receptor class B member 1 (SCARB1), found in Cricetulus griseus (Chinese hamster).